We begin with the raw amino-acid sequence, 363 residues long: 3-dehydroquinate synthase (363 aa).

NAD(+) contacts are provided by residues 107-111, 131-132, Lys-144, and Lys-153; these read GVIGD and TT. Zn(2+) is bound by residues Glu-186, His-251, and His-268.

It belongs to the sugar phosphate cyclases superfamily. Dehydroquinate synthase family. It depends on Co(2+) as a cofactor. Zn(2+) serves as cofactor. Requires NAD(+) as cofactor.

It is found in the cytoplasm. The enzyme catalyses 7-phospho-2-dehydro-3-deoxy-D-arabino-heptonate = 3-dehydroquinate + phosphate. It functions in the pathway metabolic intermediate biosynthesis; chorismate biosynthesis; chorismate from D-erythrose 4-phosphate and phosphoenolpyruvate: step 2/7. In terms of biological role, catalyzes the conversion of 3-deoxy-D-arabino-heptulosonate 7-phosphate (DAHP) to dehydroquinate (DHQ). This chain is 3-dehydroquinate synthase, found in Nostoc punctiforme (strain ATCC 29133 / PCC 73102).